Reading from the N-terminus, the 388-residue chain is Mycinamicin VIII C21 methyl hydroxylase (388 aa).

The heme site is built by His-87, Arg-91, Arg-279, His-335, and Cys-337.

It belongs to the cytochrome P450 family. It depends on heme as a cofactor.

The protein operates within antibiotic biosynthesis; mycinamicin biosynthesis. Its function is as follows. Involved in the biosynthesis of mycinamicin, a 16-membered macrolide antibiotic. Catalyzes hydroxylation at the C21 methyl group of mycinamicin VIII, the earliest macrolide form in the postpolyketide synthase tailoring pathway, leading to mycinamicin VII. Uses ferredoxin MycCII in electron transfer for catalysis. The polypeptide is Mycinamicin VIII C21 methyl hydroxylase (Micromonospora griseorubida).